A 220-amino-acid polypeptide reads, in one-letter code: MELYLDTSDVAAVKKLARIFPLAGVTTNPSIVAAGKKPLDVLLPELHDALGGKGQLFAQVMATSAEAMVEDARKLRAIINDLVVKVPVTAEGLAAIKILKAEGIPTLGTAVYGAAQGMLSALAGAEYVAPYVNRLDAQGGDGIQTVVELQQLLTLHAPQAKVLAASFKTPRQALNCLLAGCEAITLPLDVAQQFISAPAVDAAVAKFEQDWQSAFGRTSI.

K85 acts as the Schiff-base intermediate with substrate in catalysis.

Belongs to the transaldolase family. Type 3A subfamily. Homodecamer.

The protein localises to the cytoplasm. The catalysed reaction is beta-D-fructose 6-phosphate = dihydroxyacetone + D-glyceraldehyde 3-phosphate. Catalyzes the reversible formation of fructose 6-phosphate from dihydroxyacetone and D-glyceraldehyde 3-phosphate via an aldolization reaction. In Enterobacter sp. (strain 638), this protein is Fructose-6-phosphate aldolase.